The sequence spans 286 residues: Thiamine-monophosphate kinase (286 aa).

Mg(2+)-binding residues include Asp-22, Ser-36, Thr-37, and Asp-38. Asp-45 lines the substrate pocket. Mg(2+) is bound by residues Asp-66 and Asp-111. ATP-binding positions include 110 to 111 (GD) and Arg-136. Asp-191 is a binding site for Mg(2+). Residue Ser-193 coordinates ATP. Asp-194 is a Mg(2+) binding site. Residue Tyr-282 participates in substrate binding.

The protein belongs to the thiamine-monophosphate kinase family.

The enzyme catalyses thiamine phosphate + ATP = thiamine diphosphate + ADP. It participates in cofactor biosynthesis; thiamine diphosphate biosynthesis; thiamine diphosphate from thiamine phosphate: step 1/1. Functionally, catalyzes the ATP-dependent phosphorylation of thiamine-monophosphate (TMP) to form thiamine-pyrophosphate (TPP), the active form of vitamin B1. This chain is Thiamine-monophosphate kinase, found in Methanospirillum hungatei JF-1 (strain ATCC 27890 / DSM 864 / NBRC 100397 / JF-1).